The following is a 356-amino-acid chain: Nicotinate-nucleotide--dimethylbenzimidazole phosphoribosyltransferase (356 aa).

The active-site Proton acceptor is the Glu317.

It belongs to the CobT family. As to quaternary structure, homodimer.

The catalysed reaction is 5,6-dimethylbenzimidazole + nicotinate beta-D-ribonucleotide = alpha-ribazole 5'-phosphate + nicotinate + H(+). The protein operates within nucleoside biosynthesis; alpha-ribazole biosynthesis; alpha-ribazole from 5,6-dimethylbenzimidazole: step 1/2. Functionally, catalyzes the synthesis of alpha-ribazole-5'-phosphate from nicotinate mononucleotide (NAMN) and 5,6-dimethylbenzimidazole (DMB). The protein is Nicotinate-nucleotide--dimethylbenzimidazole phosphoribosyltransferase of Salmonella typhi.